A 129-amino-acid chain; its full sequence is Large ribosomal subunit protein bL12 (129 aa).

This sequence belongs to the bacterial ribosomal protein bL12 family. In terms of assembly, homodimer. Part of the ribosomal stalk of the 50S ribosomal subunit. Forms a multimeric L10(L12)X complex, where L10 forms an elongated spine to which 2 to 4 L12 dimers bind in a sequential fashion. Binds GTP-bound translation factors.

Forms part of the ribosomal stalk which helps the ribosome interact with GTP-bound translation factors. Is thus essential for accurate translation. The protein is Large ribosomal subunit protein bL12 of Protochlamydia amoebophila (strain UWE25).